The following is a 168-amino-acid chain: Cell division inhibitor SulA (168 aa).

The segment at Ala-106–Tyr-112 is ftsZ binding. A lon protease binding region spans residues Lys-161–His-168.

Belongs to the SulA family. As to quaternary structure, interacts with FtsZ. Is rapidly cleaved and degraded by the Lon protease once DNA damage is repaired.

In terms of biological role, component of the SOS system and an inhibitor of cell division. Accumulation of SulA causes rapid cessation of cell division and the appearance of long, non-septate filaments. In the presence of GTP, binds a polymerization-competent form of FtsZ in a 1:1 ratio, thus inhibiting FtsZ polymerization and therefore preventing it from participating in the assembly of the Z ring. This mechanism prevents the premature segregation of damaged DNA to daughter cells during cell division. In Serratia marcescens, this protein is Cell division inhibitor SulA.